Consider the following 95-residue polypeptide: Small ribosomal subunit protein uS19 (95 aa).

The protein belongs to the universal ribosomal protein uS19 family.

Its function is as follows. Protein S19 forms a complex with S13 that binds strongly to the 16S ribosomal RNA. This chain is Small ribosomal subunit protein uS19, found in Chloroflexus aurantiacus (strain ATCC 29366 / DSM 635 / J-10-fl).